The chain runs to 358 residues: Peptide chain release factor 1 (358 aa).

The residue at position 237 (Gln237) is an N5-methylglutamine.

It belongs to the prokaryotic/mitochondrial release factor family. In terms of processing, methylated by PrmC. Methylation increases the termination efficiency of RF1.

The protein resides in the cytoplasm. In terms of biological role, peptide chain release factor 1 directs the termination of translation in response to the peptide chain termination codons UAG and UAA. The sequence is that of Peptide chain release factor 1 from Streptomyces coelicolor (strain ATCC BAA-471 / A3(2) / M145).